The chain runs to 294 residues: 4-hydroxy-tetrahydrodipicolinate synthase (294 aa).

Thr-45 is a binding site for pyruvate. Tyr-133 serves as the catalytic Proton donor/acceptor. Catalysis depends on Lys-162, which acts as the Schiff-base intermediate with substrate. Ile-204 contacts pyruvate.

The protein belongs to the DapA family. As to quaternary structure, homotetramer; dimer of dimers.

It is found in the cytoplasm. It carries out the reaction L-aspartate 4-semialdehyde + pyruvate = (2S,4S)-4-hydroxy-2,3,4,5-tetrahydrodipicolinate + H2O + H(+). Its pathway is amino-acid biosynthesis; L-lysine biosynthesis via DAP pathway; (S)-tetrahydrodipicolinate from L-aspartate: step 3/4. Its function is as follows. Catalyzes the condensation of (S)-aspartate-beta-semialdehyde [(S)-ASA] and pyruvate to 4-hydroxy-tetrahydrodipicolinate (HTPA). This chain is 4-hydroxy-tetrahydrodipicolinate synthase, found in Bartonella tribocorum (strain CIP 105476 / IBS 506).